The chain runs to 375 residues: Ubl carboxyl-terminal hydrolase 18 (375 aa).

A disordered region spans residues 18-45; it reads ESPQSPADLEEKKEEDSNMKREQPRERP. Positions 26–45 are enriched in basic and acidic residues; the sequence is LEEKKEEDSNMKREQPRERP. The USP domain occupies 55 to 373; that stretch reads VGLHNIGQTC…TAYLLVYMKM (319 aa). Cys64 acts as the Nucleophile in catalysis. His321 (proton acceptor) is an active-site residue.

The protein belongs to the peptidase C19 family. Interacts with STAT2; the interaction is direct. Interacts with IFNAR2; indirectly via STAT2, it negatively regulates the assembly of the ternary interferon-IFNAR1-IFNAR2 complex and inhibits type I interferon signaling. Interacts with STING1. Interacts with USP20.

The catalysed reaction is Thiol-dependent hydrolysis of ester, thioester, amide, peptide and isopeptide bonds formed by the C-terminal Gly of ubiquitin (a 76-residue protein attached to proteins as an intracellular targeting signal).. In terms of biological role, interferon-induced ISG15-specific protease that plays a crucial role for maintaining a proper balance of ISG15-conjugated proteins in cells. Regulates protein ISGylation by efficiently cleaving ISG15 conjugates linked via isopeptide bonds. Regulates T-cell activation and T-helper 17 (Th17) cell differentiation by deubiquitinating TAK1, likely to keep TAK1-TAB complexes in steady conditions. In turn, restricts activation of NF-kappa-B, NFAT, and JNK as well as expression of IL2 in T-cells after TCR activation. Acts as a molecular adapter with USP20 to promote innate antiviral response through deubiquitinating STING1. Involved also in the negative regulation of the inflammatory response triggered by type I interferon. Upon recruitment by STAT2 to the type I interferon receptor subunit IFNAR2 interferes with the assembly of the ternary interferon-IFNAR1-IFNAR2 complex and acts as a negative regulator of the type I interferon signaling pathway. This is Ubl carboxyl-terminal hydrolase 18 (USP18) from Pongo abelii (Sumatran orangutan).